Consider the following 92-residue polypeptide: Small ribosomal subunit protein uS19 (92 aa).

Belongs to the universal ribosomal protein uS19 family.

Its function is as follows. Protein S19 forms a complex with S13 that binds strongly to the 16S ribosomal RNA. In Sinorhizobium medicae (strain WSM419) (Ensifer medicae), this protein is Small ribosomal subunit protein uS19.